Here is a 450-residue protein sequence, read N- to C-terminus: Signal recognition particle protein (450 aa).

Residues 107 to 114 (GLQGVGKT), 190 to 194 (DTAGR), and 248 to 251 (TKTD) each bind GTP.

This sequence belongs to the GTP-binding SRP family. SRP54 subfamily. In terms of assembly, part of the signal recognition particle protein translocation system, which is composed of SRP and FtsY. SRP is a ribonucleoprotein composed of Ffh and a 4.5S RNA molecule.

It is found in the cytoplasm. The enzyme catalyses GTP + H2O = GDP + phosphate + H(+). Involved in targeting and insertion of nascent membrane proteins into the cytoplasmic membrane. Binds to the hydrophobic signal sequence of the ribosome-nascent chain (RNC) as it emerges from the ribosomes. The SRP-RNC complex is then targeted to the cytoplasmic membrane where it interacts with the SRP receptor FtsY. Interaction with FtsY leads to the transfer of the RNC complex to the Sec translocase for insertion into the membrane, the hydrolysis of GTP by both Ffh and FtsY, and the dissociation of the SRP-FtsY complex into the individual components. This chain is Signal recognition particle protein, found in Buchnera aphidicola subsp. Schizaphis graminum (strain Sg).